Here is a 422-residue protein sequence, read N- to C-terminus: L-cysteine:1D-myo-inositol 2-amino-2-deoxy-alpha-D-glucopyranoside ligase (422 aa).

C43 contributes to the Zn(2+) binding site. L-cysteinyl-5'-AMP is bound by residues C43 to T46, T58, and N81 to T83. The 'HIGH' region signature appears at I45–H55. Residues A185–L200 show a composition bias toward basic and acidic residues. The disordered stretch occupies residues A185–V221. A 'ERGGDP' region motif is present at residues E186–P191. W227 contributes to the L-cysteinyl-5'-AMP binding site. Residue C231 participates in Zn(2+) binding. G249–D251 lines the L-cysteinyl-5'-AMP pocket. Position 256 (H256) interacts with Zn(2+). Position 288 (I288) interacts with L-cysteinyl-5'-AMP. Residues K294–S298 carry the 'KMSKS' region motif.

Belongs to the class-I aminoacyl-tRNA synthetase family. MshC subfamily. As to quaternary structure, monomer. It depends on Zn(2+) as a cofactor.

It carries out the reaction 1D-myo-inositol 2-amino-2-deoxy-alpha-D-glucopyranoside + L-cysteine + ATP = 1D-myo-inositol 2-(L-cysteinylamino)-2-deoxy-alpha-D-glucopyranoside + AMP + diphosphate + H(+). In terms of biological role, catalyzes the ATP-dependent condensation of GlcN-Ins and L-cysteine to form L-Cys-GlcN-Ins. The protein is L-cysteine:1D-myo-inositol 2-amino-2-deoxy-alpha-D-glucopyranoside ligase of Geodermatophilus obscurus (strain ATCC 25078 / DSM 43160 / JCM 3152 / CCUG 61914 / KCC A-0152 / KCTC 9177 / NBRC 13315 / NRRL B-3577 / G-20).